The sequence spans 297 residues: 4-hydroxy-tetrahydrodipicolinate synthase (297 aa).

Thr-49 contacts pyruvate. The active-site Proton donor/acceptor is the Tyr-137. Lys-166 serves as the catalytic Schiff-base intermediate with substrate. Ile-208 lines the pyruvate pocket.

This sequence belongs to the DapA family. Homotetramer; dimer of dimers.

The protein resides in the cytoplasm. The catalysed reaction is L-aspartate 4-semialdehyde + pyruvate = (2S,4S)-4-hydroxy-2,3,4,5-tetrahydrodipicolinate + H2O + H(+). The protein operates within amino-acid biosynthesis; L-lysine biosynthesis via DAP pathway; (S)-tetrahydrodipicolinate from L-aspartate: step 3/4. Its function is as follows. Catalyzes the condensation of (S)-aspartate-beta-semialdehyde [(S)-ASA] and pyruvate to 4-hydroxy-tetrahydrodipicolinate (HTPA). The sequence is that of 4-hydroxy-tetrahydrodipicolinate synthase from Phocaeicola vulgatus (strain ATCC 8482 / DSM 1447 / JCM 5826 / CCUG 4940 / NBRC 14291 / NCTC 11154) (Bacteroides vulgatus).